The following is a 583-amino-acid chain: Propane 2-monooxygenase operon transcriptional activator MimR (583 aa).

Residues 320 to 513 (LAGQSSSFRR…LRHVLTETVR (194 aa)) form the Sigma-54 factor interaction domain. ATP is bound by residues 349–356 (ERGSGRTY) and 395–404 (SADFAVIVSD).

Functionally, acts as a transcriptional activator of the mimABCD operon encoding the propane 2-monooxygenase complex. In Mycolicibacterium smegmatis (strain ATCC 700084 / mc(2)155) (Mycobacterium smegmatis), this protein is Propane 2-monooxygenase operon transcriptional activator MimR.